A 357-amino-acid polypeptide reads, in one-letter code: Protein-glutamate methylesterase/protein-glutamine glutaminase 5 (357 aa).

Residues 10 to 127 (RVLVVDDSSF…IDAQKAFKEE (118 aa)) form the Response regulatory domain. Asp-61 carries the 4-aspartylphosphate modification. The region spanning 161–357 (PRPAGQRYQY…IGTEITKIAG (197 aa)) is the CheB-type methylesterase domain. Residues Ser-176, His-203, and Asp-301 contribute to the active site.

Belongs to the CheB family. Phosphorylated by CheA. Phosphorylation of the N-terminal regulatory domain activates the methylesterase activity.

It is found in the cytoplasm. The catalysed reaction is [protein]-L-glutamate 5-O-methyl ester + H2O = L-glutamyl-[protein] + methanol + H(+). The enzyme catalyses L-glutaminyl-[protein] + H2O = L-glutamyl-[protein] + NH4(+). Functionally, involved in chemotaxis. Part of a chemotaxis signal transduction system that modulates chemotaxis in response to various stimuli. Catalyzes the demethylation of specific methylglutamate residues introduced into the chemoreceptors (methyl-accepting chemotaxis proteins or MCP) by CheR. Also mediates the irreversible deamidation of specific glutamine residues to glutamic acid. The polypeptide is Protein-glutamate methylesterase/protein-glutamine glutaminase 5 (Geobacter metallireducens (strain ATCC 53774 / DSM 7210 / GS-15)).